A 2211-amino-acid chain; its full sequence is Nonribosomal peptide synthetase 13 (2211 aa).

Positions 76-475 are adenylation 1; sequence TYAELDSLSD…IEHHLQLTLP (400 aa). A Carrier 1 domain is found at 594 to 671; that stretch reads PPSTPKEATI…EQSKRAGLIQ (78 aa). Residue Ser-631 is modified to O-(pantetheine 4'-phosphoryl)serine. The interval 710 to 975 is condensation 1; sequence EDIYPCTALQ…IATVPTRIRV (266 aa). The tract at residues 1169-1563 is adenylation 2; that stretch reads TYRELWAHSS…LGAVEASVMR (395 aa). One can recognise a Carrier 2 domain in the interval 1677–1756; sequence PMSDDNERRL…RSRHLITEQA (80 aa). Ser-1714 carries the O-(pantetheine 4'-phosphoryl)serine modification. The segment at 1814-2069 is condensation 2; it reads HFQFDLSGAV…CTNYIPYRLS (256 aa).

Belongs to the NRP synthetase family.

The catalysed reaction is L-proline + L-tryptophan + 2 ATP = brevianamide F + 2 AMP + 2 diphosphate + 2 H(+). The protein operates within mycotoxin biosynthesis. Its function is as follows. Nonribosomal peptide synthetase; part of the gene cluster that mediates the biosynthesis of fumitremorgins, indole alkaloids that carry not only intriguing chemical structures, but also interesting biological and pharmacological activities. The biosynthesis of fumitremorgin-type alkaloids begins by condensation of the two amino acids L-tryptophan and L-proline to brevianamide F, catalyzed by the non-ribosomal peptide synthetase ftmA. Brevianamide F is then prenylated by the prenyltransferase ftmPT1/ftmB in the presence of dimethylallyl diphosphate, resulting in the formation of tryprostatin B. The three cytochrome P450 monooxygenases, ftmP450-1/ftmC, ftmP450-2/ftmE and ftmP450-3/FtmG, are responsible for the conversion of tryprostatin B to 6-hydroxytryprostatin B, tryprostatin A to fumitremorgin C and fumitremorgin C to 12,13-dihydroxyfumitremorgin C, respectively. The putative methyltransferase ftmMT/ftmD is expected for the conversion of 6-hydroxytryprostatin B to tryprostatin A. FtmPT2/FtmH catalyzes the prenylation of 12,13-dihydroxyfumitre-morgin C in the presence of dimethylallyl diphosphate, resulting in the formation of fumitremorgin B. Fumitremorgin B is further converted to verruculogen by ftmOx1/ftmF via the insertion of an endoperoxide bond between the two prenyl moieties. In some fungal species, verruculogen is further converted to fumitremorgin A, but the enzymes involved in this step have not been identified yet. The polypeptide is Nonribosomal peptide synthetase 13 (Aspergillus fumigatus (strain ATCC MYA-4609 / CBS 101355 / FGSC A1100 / Af293) (Neosartorya fumigata)).